A 239-amino-acid polypeptide reads, in one-letter code: tRNA (guanine-N(1)-)-methyltransferase (239 aa).

S-adenosyl-L-methionine is bound by residues G108 and 127-132 (LGDFVL).

This sequence belongs to the RNA methyltransferase TrmD family. As to quaternary structure, homodimer.

It localises to the cytoplasm. The catalysed reaction is guanosine(37) in tRNA + S-adenosyl-L-methionine = N(1)-methylguanosine(37) in tRNA + S-adenosyl-L-homocysteine + H(+). Its function is as follows. Specifically methylates guanosine-37 in various tRNAs. This chain is tRNA (guanine-N(1)-)-methyltransferase, found in Streptococcus thermophilus (strain CNRZ 1066).